Here is a 361-residue protein sequence, read N- to C-terminus: Phospho-N-acetylmuramoyl-pentapeptide-transferase (361 aa).

10 consecutive transmembrane segments (helical) span residues 25-45, 73-93, 98-118, 139-159, 168-188, 200-220, 237-257, 264-284, 289-309, and 339-359; these read RGILAALTALFLSLWMGPAVI, TMGGSLILLTVTLSVLLWGDL, VWLVLAVMICFGAIGWYDDWI, IFGLAAGLFLYYTADVPAAIT, IALPLVGVSFVVIAYFWIVGF, GLAIMPTVLVACALGVFAYAS, AGELIIICSAIAGAGLGFLWF, VFMGDIGALSLGAVLGTIAVI, MVLVIMGGVFVIETLSVIIQV, and VIVRFWIISVVLVLIGLATLK.

It belongs to the glycosyltransferase 4 family. MraY subfamily. Mg(2+) serves as cofactor.

Its subcellular location is the cell inner membrane. The catalysed reaction is UDP-N-acetyl-alpha-D-muramoyl-L-alanyl-gamma-D-glutamyl-meso-2,6-diaminopimeloyl-D-alanyl-D-alanine + di-trans,octa-cis-undecaprenyl phosphate = di-trans,octa-cis-undecaprenyl diphospho-N-acetyl-alpha-D-muramoyl-L-alanyl-D-glutamyl-meso-2,6-diaminopimeloyl-D-alanyl-D-alanine + UMP. It participates in cell wall biogenesis; peptidoglycan biosynthesis. Functionally, catalyzes the initial step of the lipid cycle reactions in the biosynthesis of the cell wall peptidoglycan: transfers peptidoglycan precursor phospho-MurNAc-pentapeptide from UDP-MurNAc-pentapeptide onto the lipid carrier undecaprenyl phosphate, yielding undecaprenyl-pyrophosphoryl-MurNAc-pentapeptide, known as lipid I. The protein is Phospho-N-acetylmuramoyl-pentapeptide-transferase of Xanthomonas oryzae pv. oryzae (strain MAFF 311018).